We begin with the raw amino-acid sequence, 210 residues long: 3-hexulose-6-phosphate synthase (210 aa).

It belongs to the HPS/KGPDC family. HPS subfamily.

It catalyses the reaction D-ribulose 5-phosphate + formaldehyde = D-arabino-hex-3-ulose 6-phosphate. It functions in the pathway one-carbon metabolism; formaldehyde assimilation via RuMP pathway; D-fructose 6-phosphate from D-ribulose 5-phosphate and formaldehyde: step 1/2. Catalyzes the condensation of ribulose 5-phosphate with formaldehyde to form 3-hexulose 6-phosphate. This is 3-hexulose-6-phosphate synthase from Staphylococcus epidermidis (strain ATCC 12228 / FDA PCI 1200).